We begin with the raw amino-acid sequence, 446 residues long: C-type lectin domain family 18 member C (446 aa).

Positions 1–26 (MLHPETSPGRGHLLAVLLALLGTAWA) are cleaved as a signal peptide. The region spanning 52-182 (LSLHNRLRSW…AAIEAFVCAY (131 aa)) is the SCP domain. N-linked (GlcNAc...) asparagine glycosylation occurs at Asn144. Residues 228 to 261 (PRNPCRMSCQNHGRLNISTCHCHCPPGYTGRYCQ) form the EGF-like domain. 4 disulfide bridges follow: Cys236/Cys249, Cys251/Cys260, Cys327/Cys432, and Cys408/Cys424. In terms of domain architecture, C-type lectin spans 306–433 (IDGDCFMVSS…CKTRNRYICQ (128 aa)).

Detected in peripheral blood cells.

It is found in the secreted. The protein resides in the endoplasmic reticulum. Its subcellular location is the golgi apparatus. The protein localises to the endosome. In terms of biological role, binds polysaccharidesin a Ca(2+)-independent manner with a preferentially binding to fucoidan, beta-glucans and galactans. This is C-type lectin domain family 18 member C (CLEC18C) from Homo sapiens (Human).